Reading from the N-terminus, the 137-residue chain is Protein CTLA-2-alpha (137 aa).

Residues Met-1–Ser-27 form the signal peptide. A run of 2 repeats spans residues Glu-39–Lys-41 and Glu-42–Lys-44. Residues Glu-39–Lys-44 are 2 X 3 AA tandem repeats of E-W-K. Residues Ala-114–Glu-137 form a disordered region.

To the propeptide regions of cysteine proteases.

It is found in the secreted. Functionally, not known, expressed in activated T-cell. This is Protein CTLA-2-alpha (Ctla2a) from Mus musculus (Mouse).